Here is a 497-residue protein sequence, read N- to C-terminus: 4,4'-diapolycopene oxygenase (497 aa).

It belongs to the carotenoid/retinoid oxidoreductase family. Requires FAD as cofactor.

The enzyme catalyses all-trans-4,4'-diapolycopene + 4 AH2 + 4 O2 = all-trans-4,4'-diapolycopene-4,4'-dial + 4 A + 6 H2O. The catalysed reaction is all-trans-4,4'-diaponeurosporene + 2 AH2 + 2 O2 = 4,4'-diaponeurosporenal + 2 A + 3 H2O. The protein operates within carotenoid biosynthesis. Involved in the biosynthesis of C30 carotenoids. Catalyzes the oxidation of the terminal methyl side groups of 4,4'-diapolycopene to yield 4,4'-diapolycopen-4,4'-dial via the aldehyde intermediate 4,4'-diapolycopen-al. Also able to catalyze the oxidation of the terminal methyl side group of 4,4'-diaponeurosporene to form 4,4'-diaponeurosporen-4-al. It has moderate to low activity on the C40 substrates neurosporene and lycopene, and has no detectable activity on zeta-carotene or beta-carotene. The protein is 4,4'-diapolycopene oxygenase of Methylomonas sp.